The following is a 263-amino-acid chain: Uridylate kinase (263 aa).

29–32 is a binding site for ATP; that stretch reads KVSG. G71 lines the UMP pocket. 2 residues coordinate ATP: G72 and R76. UMP contacts are provided by residues D91 and 152-159; that span reads TGNPFFTT. ATP is bound by residues T179, Q180, Y185, and D188.

The protein belongs to the UMP kinase family. Homohexamer.

The protein resides in the cytoplasm. The catalysed reaction is UMP + ATP = UDP + ADP. It participates in pyrimidine metabolism; CTP biosynthesis via de novo pathway; UDP from UMP (UMPK route): step 1/1. Its activity is regulated as follows. Inhibited by UTP. Functionally, catalyzes the reversible phosphorylation of UMP to UDP. This chain is Uridylate kinase, found in Maricaulis maris (strain MCS10) (Caulobacter maris).